A 74-amino-acid chain; its full sequence is Cytochrome c oxidase assembly factor 5 (74 aa).

Residues 27–65 form the CHCH domain; the sequence is QSDCVLKEGKSPRQCLKEGNCKALKYSFFECKRSMLDAR. The Cx10C motif motif lies at 30 to 41; that stretch reads CVLKEGKSPRQC. Disulfide bonds link C30–C57 and C41–C47. S37 is modified (phosphoserine). Residues 47–57 carry the Cx9C motif motif; the sequence is CKALKYSFFEC.

The protein belongs to the PET191 family.

In terms of biological role, involved in an early step of the mitochondrial complex IV assembly process. This Bos taurus (Bovine) protein is Cytochrome c oxidase assembly factor 5 (COA5).